The chain runs to 414 residues: Glutamyl-tRNA reductase (414 aa).

Substrate-binding positions include 49–52 (TCNR), Ser-108, 113–115 (EPQ), and Gln-119. Cys-50 serves as the catalytic Nucleophile. Residue 188–193 (GAGQTG) participates in NADP(+) binding.

It belongs to the glutamyl-tRNA reductase family. Homodimer.

It carries out the reaction (S)-4-amino-5-oxopentanoate + tRNA(Glu) + NADP(+) = L-glutamyl-tRNA(Glu) + NADPH + H(+). Its pathway is porphyrin-containing compound metabolism; protoporphyrin-IX biosynthesis; 5-aminolevulinate from L-glutamyl-tRNA(Glu): step 1/2. Its function is as follows. Catalyzes the NADPH-dependent reduction of glutamyl-tRNA(Glu) to glutamate 1-semialdehyde (GSA). The chain is Glutamyl-tRNA reductase from Francisella philomiragia subsp. philomiragia (strain ATCC 25017 / CCUG 19701 / FSC 153 / O#319-036).